A 402-amino-acid chain; its full sequence is Subtilisin-like protease 9 (402 aa).

The N-terminal stretch at 1 to 18 (MGFFRILFSLSLCALSLA) is a signal peptide. A propeptide spanning residues 19–120 (IPSKLIGLEN…VEVDRVVKLD (102 aa)) is cleaved from the precursor. Residues 36-119 (SYIVVMKSAV…YVEVDRVVKL (84 aa)) form the Inhibitor I9 domain. The Peptidase S8 domain occupies 130–402 (SWGLGRISHR…KKLLYNGSGA (273 aa)). Catalysis depends on charge relay system residues Asp-162 and His-193. N-linked (GlcNAc...) asparagine glycosylation occurs at Asn-254. The active-site Charge relay system is Ser-348. Residues Asn-390 and Asn-398 are each glycosylated (N-linked (GlcNAc...) asparagine).

This sequence belongs to the peptidase S8 family.

The protein localises to the secreted. Functionally, secreted subtilisin-like serine protease with keratinolytic activity that contributes to pathogenicity. This Arthroderma gypseum (strain ATCC MYA-4604 / CBS 118893) (Microsporum gypseum) protein is Subtilisin-like protease 9 (SUB9).